We begin with the raw amino-acid sequence, 175 residues long: ATP-dependent protease subunit HslV (175 aa).

Thr2 is an active-site residue. Residues Gly158, Cys161, and Thr164 each contribute to the Na(+) site.

It belongs to the peptidase T1B family. HslV subfamily. As to quaternary structure, a double ring-shaped homohexamer of HslV is capped on each side by a ring-shaped HslU homohexamer. The assembly of the HslU/HslV complex is dependent on binding of ATP.

It localises to the cytoplasm. The catalysed reaction is ATP-dependent cleavage of peptide bonds with broad specificity.. With respect to regulation, allosterically activated by HslU binding. In terms of biological role, protease subunit of a proteasome-like degradation complex believed to be a general protein degrading machinery. This chain is ATP-dependent protease subunit HslV, found in Haemophilus influenzae (strain 86-028NP).